Reading from the N-terminus, the 1295-residue chain is DNA (cytosine-5)-methyltransferase CMT2 (1295 aa).

Disordered regions lie at residues 1–23 (MLSPAKCESEEAQAPLDLHSSSR), 61–91 (RRSTTLNCNSPEENGGEGRVSQRKSSRGKSQ), and 249–287 (NSSKQSLGSNKRMRRSQRFMKGTENEGEENLGKSKGKGM). Over residues 61-72 (RRSTTLNCNSPE) the composition is skewed to polar residues. The 116-residue stretch at 578–693 (HTFSLGDFAY…VEYSTFQTLR (116 aa)) folds into the BAH domain. Positions 727 to 1268 (LPVLDLYSGC…YSLGMAFRGL (542 aa)) constitute an SAM-dependent MTase C5-type domain. The disordered stretch occupies residues 814 to 835 (SVNSTKETSGSSSSSDDDSDSE). The Chromo domain maps to 837–902 (YEVEKLVDIC…SGFKSKILPL (66 aa)). Residue Cys915 is part of the active site.

The protein belongs to the class I-like SAM-binding methyltransferase superfamily. C5-methyltransferase family.

The protein localises to the nucleus. The enzyme catalyses a 2'-deoxycytidine in DNA + S-adenosyl-L-methionine = a 5-methyl-2'-deoxycytidine in DNA + S-adenosyl-L-homocysteine + H(+). Functionally, may be involved in the CpXpG methylation and in gene silencing. The chain is DNA (cytosine-5)-methyltransferase CMT2 (CMT2) from Arabidopsis thaliana (Mouse-ear cress).